A 438-amino-acid chain; its full sequence is Aspartate aminotransferase, cytoplasmic (438 aa).

Gly73, Trp167, and Asn220 together coordinate L-aspartate. Lys284 carries the post-translational modification N6-(pyridoxal phosphate)lysine. Residue Arg412 participates in L-aspartate binding.

Belongs to the class-I pyridoxal-phosphate-dependent aminotransferase family. Homodimer. It depends on pyridoxal 5'-phosphate as a cofactor.

The protein localises to the cytoplasm. It carries out the reaction L-aspartate + 2-oxoglutarate = oxaloacetate + L-glutamate. In terms of biological role, plays a key role in amino acid metabolism. This is Aspartate aminotransferase, cytoplasmic (aatB) from Dictyostelium discoideum (Social amoeba).